A 285-amino-acid polypeptide reads, in one-letter code: Ribosomal RNA small subunit methyltransferase A (285 aa).

Positions 11, 13, 37, 57, 85, and 105 each coordinate S-adenosyl-L-methionine.

It belongs to the class I-like SAM-binding methyltransferase superfamily. rRNA adenine N(6)-methyltransferase family. RsmA subfamily.

The protein resides in the cytoplasm. The enzyme catalyses adenosine(1518)/adenosine(1519) in 16S rRNA + 4 S-adenosyl-L-methionine = N(6)-dimethyladenosine(1518)/N(6)-dimethyladenosine(1519) in 16S rRNA + 4 S-adenosyl-L-homocysteine + 4 H(+). In terms of biological role, specifically dimethylates two adjacent adenosines (A1518 and A1519) in the loop of a conserved hairpin near the 3'-end of 16S rRNA in the 30S particle. May play a critical role in biogenesis of 30S subunits. This Campylobacter curvus (strain 525.92) protein is Ribosomal RNA small subunit methyltransferase A.